Here is a 361-residue protein sequence, read N- to C-terminus: MNQVFNFSSGPAMLPAEVLRKAEQELCNWHGLGTSVMEISHRSKEFLEVAQSSEQDLRELLAVPDNYKVLFCQGGARAQFAAVPMNLLGEATRADYIDGGYWAHSAIKEAQKYCDPQVINVTTEIDSMRAIKPMRDWELSSGGAYLHYCPNETIDGLAIDELPDFGDRVVVADFSSTILSHPLDVSRFGVIYAGAQKNIGPAGLTLVIVREDLLGRASKALPSILDYSVLAENDSMFNTPPTFAWYLSGLVFKWLKAQGGLAEMDKRNQAKASLLYRTIDESYFYRNTVASANRSRMNVPFQLADSKLDALFLQESFAAGLHALKGHRVVGGMRASLYNAVPLEGVQALVDFMLDFARRHG.

2 residues coordinate L-glutamate: Ser9 and Arg42. Residues 76-77 (AR), Trp102, Thr153, Asp173, and Gln196 contribute to the pyridoxal 5'-phosphate site. Lys197 is modified (N6-(pyridoxal phosphate)lysine). 238-239 (NT) is a pyridoxal 5'-phosphate binding site.

Belongs to the class-V pyridoxal-phosphate-dependent aminotransferase family. SerC subfamily. As to quaternary structure, homodimer. The cofactor is pyridoxal 5'-phosphate.

Its subcellular location is the cytoplasm. It catalyses the reaction O-phospho-L-serine + 2-oxoglutarate = 3-phosphooxypyruvate + L-glutamate. The catalysed reaction is 4-(phosphooxy)-L-threonine + 2-oxoglutarate = (R)-3-hydroxy-2-oxo-4-phosphooxybutanoate + L-glutamate. Its pathway is amino-acid biosynthesis; L-serine biosynthesis; L-serine from 3-phospho-D-glycerate: step 2/3. It participates in cofactor biosynthesis; pyridoxine 5'-phosphate biosynthesis; pyridoxine 5'-phosphate from D-erythrose 4-phosphate: step 3/5. Catalyzes the reversible conversion of 3-phosphohydroxypyruvate to phosphoserine and of 3-hydroxy-2-oxo-4-phosphonooxybutanoate to phosphohydroxythreonine. This is Phosphoserine aminotransferase from Sodalis glossinidius (strain morsitans).